The primary structure comprises 82 residues: U17-hexatoxin-Hi1a (82 aa).

Residues 1–21 form the signal peptide; sequence MKTIFAVTLLLFAIYVPECMP. 5 cysteine pairs are disulfide-bonded: C22–C33, C27–C48, C32–C61, C58–C69, and C63–C75.

As to expression, expressed by the venom gland.

It is found in the secreted. Its function is as follows. Probable ion channel inhibitor. This Hadronyche infensa (Fraser island funnel-web spider) protein is U17-hexatoxin-Hi1a.